Here is a 380-residue protein sequence, read N- to C-terminus: MDLQLKQWRSQQQNESEEQGSAATKISNFFFDQIQSQTATSAAAAPLPLFVPEPTSSSSFSCFSPDSSNSSSSSRFLKMGNFFSWAQWQELELQALIYRYMLAGASVPQELLLPIKKSLLHQSPMHFLHHPLQHSFPHHQPSWYWGRGAMDPEPGRCKRTDGKKWRCSRDVVAGHKYCDRHIHRGRNRSRKPVETATTTITTTATTTASSFVLGEELGHGPNNNHFFSSGSSQPLHLSHQQSCSSEMKQESNNNKRPYEANSGFSNGRSDDGHILRHFFDDWPRSSDSTSSPMSSSTCHLSISMPGNNTSSDVSLKLSTGNEEEEENMRNNNNEREQMNWWSNGGNHHNNMGGPLAEALRSASSTSSVLHQMGISTQVFH.

The segment at 1-21 (MDLQLKQWRSQQQNESEEQGS) is disordered. The 36-residue stretch at 82 to 117 (FFSWAQWQELELQALIYRYMLAGASVPQELLLPIKK) folds into the QLQ domain. The region spanning 151–195 (DPEPGRCKRTDGKKWRCSRDVVAGHKYCDRHIHRGRNRSRKPVET) is the WRC domain. Short sequence motifs (bipartite nuclear localization signal) lie at residues 156–166 (RCKRTDGKKWR) and 184–191 (RGRNRSRK). 2 disordered regions span residues 222 to 270 (NNNH…GRSD) and 284 to 330 (RSSD…NMRN). Composition is skewed to low complexity over residues 228–245 (SSGS…SCSS) and 285–296 (SSDSTSSPMSSS). Polar residues predominate over residues 297–320 (TCHLSISMPGNNTSSDVSLKLSTG).

The protein belongs to the GRF family. As to expression, strongly expressed in actively growing and developing tissues, such as roots, upper stems, and shoot tips containing the shoot apical meristem (SAM) and flower buds. Also expressed in mature flowers, but weakly expressed in mature stems and leaves.

It localises to the nucleus. In terms of biological role, transcription activator that plays a role in the regulation of cell expansion in leaf and cotyledons tissues. Component of a network formed by miR396, the GRFs and their interacting factors (GIFs) acting in the regulation of meristem function, at least partially through the control of cell proliferation. The sequence is that of Growth-regulating factor 4 (GRF4) from Arabidopsis thaliana (Mouse-ear cress).